We begin with the raw amino-acid sequence, 198 residues long: Recombination protein RecR (198 aa).

Residues 57 to 72 form a C4-type zinc finger; that stretch reads CSVCGHITENDPCYIC. The Toprim domain occupies 80–175; the sequence is SVICVVEDDK…KVTRLAQGLS (96 aa).

Belongs to the RecR family.

In terms of biological role, may play a role in DNA repair. It seems to be involved in an RecBC-independent recombinational process of DNA repair. It may act with RecF and RecO. The chain is Recombination protein RecR from Staphylococcus aureus (strain MSSA476).